A 200-amino-acid chain; its full sequence is MRITLLDNFDSFTYNLVEQFCLLGAEVRVMRNDTPLPTIQAALLADGCELLVLSPGPGRPEDAGCMLELLAWARGRLPVLGVCLGHQALALAAGGAVGEARKPLHGKSTSLRFDQRHPLFDGIADLRVARYHSLVVSRLPEGFDCLADADGEIMAMADPRNRQLGLQFHPESILTTHGQRLLENALLWCGALAVRERLRA.

One can recognise a Glutamine amidotransferase type-1 domain in the interval 2–195; the sequence is RITLLDNFDS…LLWCGALAVR (194 aa). 56-58 is an L-glutamine binding site; that stretch reads GPG. The active-site Nucleophile; for GATase activity is the cysteine 83. Residues glutamine 87 and 133 to 134 contribute to the L-glutamine site; that span reads SL. Active-site for GATase activity residues include histidine 169 and glutamate 171.

Heterotetramer consisting of two non-identical subunits: a beta subunit (PhnB) and a large alpha subunit (PhnA).

The catalysed reaction is chorismate + L-glutamine = anthranilate + pyruvate + L-glutamate + H(+). It functions in the pathway secondary metabolite biosynthesis; pyocyanine biosynthesis. Part of a heterotetrameric complex that catalyzes the two-step biosynthesis of anthranilate, a precursor for Pseudomonas quinolone signal (2-heptyl-3-hydroxy-4-quinolone; PQS) production which is required to induce the genes for the biosynthesis of the virulence factor pyocyanine (PCN), a characteristic blue-green phenazine pigment produced by P.aeruginosa. In the first step, the glutamine-binding beta subunit (PhnB) of anthranilate synthase (AS) provides the glutamine amidotransferase activity which generates ammonia as a substrate that, along with chorismate, is used in the second step, catalyzed by the large alpha subunit of AS (PhnA) to produce anthranilate. The protein is Anthranilate synthase component 2, pyocyanine specific of Pseudomonas aeruginosa (strain ATCC 15692 / DSM 22644 / CIP 104116 / JCM 14847 / LMG 12228 / 1C / PRS 101 / PAO1).